The following is a 190-amino-acid chain: Potassium-transporting ATPase KdpC subunit (190 aa).

The chain crosses the membrane as a helical span at residues 10 to 30; it reads TFLFLLLITGGVYPLLTTALG.

Belongs to the KdpC family. In terms of assembly, the system is composed of three essential subunits: KdpA, KdpB and KdpC.

The protein resides in the cell inner membrane. Its function is as follows. Part of the high-affinity ATP-driven potassium transport (or Kdp) system, which catalyzes the hydrolysis of ATP coupled with the electrogenic transport of potassium into the cytoplasm. This subunit acts as a catalytic chaperone that increases the ATP-binding affinity of the ATP-hydrolyzing subunit KdpB by the formation of a transient KdpB/KdpC/ATP ternary complex. The protein is Potassium-transporting ATPase KdpC subunit of Escherichia fergusonii (strain ATCC 35469 / DSM 13698 / CCUG 18766 / IAM 14443 / JCM 21226 / LMG 7866 / NBRC 102419 / NCTC 12128 / CDC 0568-73).